Reading from the N-terminus, the 236-residue chain is Orotidine 5'-phosphate decarboxylase (236 aa).

Substrate is bound by residues Asp14, Lys36, 63–72, Thr123, Arg184, Gln193, Gly213, and Arg214; that span reads DLKFHDIPNT. Residue Lys65 is the Proton donor of the active site.

The protein belongs to the OMP decarboxylase family. Type 1 subfamily. Homodimer.

It carries out the reaction orotidine 5'-phosphate + H(+) = UMP + CO2. Its pathway is pyrimidine metabolism; UMP biosynthesis via de novo pathway; UMP from orotate: step 2/2. In terms of biological role, catalyzes the decarboxylation of orotidine 5'-monophosphate (OMP) to uridine 5'-monophosphate (UMP). The polypeptide is Orotidine 5'-phosphate decarboxylase (Marinobacter nauticus (strain ATCC 700491 / DSM 11845 / VT8) (Marinobacter aquaeolei)).